Reading from the N-terminus, the 404-residue chain is Probable eukaryotic initiation factor 4A (404 aa).

The segment at 1 to 28 (MAQQGKVEPQDQDSFLDDQPGIRPIPSF) is disordered. The short motif at 26–54 (PSFDDMPLHQNLLRGIYSHGFEKPSSIQQ) is the Q motif element. Residues 57 to 231 (IVPFTRGGDI…KKFMRDPTRI (175 aa)) enclose the Helicase ATP-binding domain. 70-77 (AQSGTGKT) contacts ATP. Residues 179–182 (DEAD) carry the DEAD box motif. The Helicase C-terminal domain occupies 242–402 (GIKQFFIAVE…ELPVDFAAYL (161 aa)).

This sequence belongs to the DEAD box helicase family. eIF4A subfamily. As to quaternary structure, eIF4F is a multi-subunit complex, the composition of which varies with external and internal environmental conditions. It is composed of at least EIF4A, EIF4E and EIF4G.

The catalysed reaction is ATP + H2O = ADP + phosphate + H(+). Its function is as follows. ATP-dependent RNA helicase which is a subunit of the eIF4F complex involved in cap recognition and is required for mRNA binding to ribosome. In the current model of translation initiation, eIF4A unwinds RNA secondary structures in the 5'-UTR of mRNAs which is necessary to allow efficient binding of the small ribosomal subunit, and subsequent scanning for the initiator codon. The sequence is that of Probable eukaryotic initiation factor 4A from Trypanosoma brucei brucei (strain 927/4 GUTat10.1).